A 107-amino-acid polypeptide reads, in one-letter code: uncharacterized protein (107 aa).

3 consecutive transmembrane segments (helical) span residues 15-35 (TGSYNWFDHFFLCVYLALGIS), 43-63 (LYRVCFIFLFTGGFFLFWLSY), and 87-107 (YFPSSTWIAVLVFSWRHIFCF).

Its subcellular location is the membrane. This is an uncharacterized protein from Saccharomyces cerevisiae (strain ATCC 204508 / S288c) (Baker's yeast).